The primary structure comprises 122 residues: Large ribosomal subunit protein uL14 (122 aa).

Belongs to the universal ribosomal protein uL14 family. In terms of assembly, part of the 50S ribosomal subunit. Forms a cluster with proteins L3 and L19. In the 70S ribosome, L14 and L19 interact and together make contacts with the 16S rRNA in bridges B5 and B8.

In terms of biological role, binds to 23S rRNA. Forms part of two intersubunit bridges in the 70S ribosome. The sequence is that of Large ribosomal subunit protein uL14 from Pseudomonas savastanoi pv. phaseolicola (strain 1448A / Race 6) (Pseudomonas syringae pv. phaseolicola (strain 1448A / Race 6)).